Reading from the N-terminus, the 359-residue chain is MPNPSSTSSPYPLPEEIRNLLADVETFVADILKGENLSKKAKEKRESLIKKIKDVKSIYLQEFRDKGDAEDGEEYDDPFAGPPDTISLASERYDKDDEATSDGAQFPPIAAQDLPFVLKAGYLEKRRKDHSFLGFEWQKRWCALSKTVFYYYGSDKDKQQKGEFAIDGYSVRMNNALRKDGKKDCCFEISAPDKRIYQFTAASPKDAEEWVQQLKFVLQDMESDIIPEDYDERGELYDDVDHPLPISNLPTSSQPIDDEIYEELPEEEEDSAPVKVVEQRKMGQDSVHHTSGDKSTDYANFYQGLWDCTGAFSDELSFKRGDVIYILSKEYNRYGWWVGEMKGAIGLVPKAYIMEMYDI.

3 positions are modified to phosphoserine: Ser5, Ser6, and Ser9. Residues 67 to 88 (GDAEDGEEYDDPFAGPPDTISL) are disordered. Tyr75 carries the phosphotyrosine modification. Ser87 and Ser90 each carry phosphoserine. One can recognise a PH domain in the interval 116 to 219 (FVLKAGYLEK…WVQQLKFVLQ (104 aa)). Phosphotyrosine is present on residues Tyr151 and Tyr197. Ser223 bears the Phosphoserine mark. The residue at position 261 (Tyr261) is a Phosphotyrosine. At Ser286 the chain carries Phosphoserine. The region spanning 297 to 358 (DYANFYQGLW…PKAYIMEMYD (62 aa)) is the SH3 domain.

The protein belongs to the SKAP family. In terms of assembly, interacts with FYB1, which is required for SKAP2 protein stability. Interacts with PTPNS1. Part of a complex consisting of SKAP2, FYB1 and PTPNS1. Part of a complex consisting of SKAP2, FYB1 and LILRB3. Interacts with LAT, GRB2, PTK2B, and PRAM1. May interact with actin. May interact with FYN, HCK and LYN. Interacts with FASLG.

The protein resides in the cytoplasm. In terms of biological role, may be involved in B-cell and macrophage adhesion processes. In B-cells, may act by coupling the B-cell receptor (BCR) to integrin activation. May play a role in src signaling pathway. The sequence is that of Src kinase-associated phosphoprotein 2 (SKAP2) from Pongo abelii (Sumatran orangutan).